Here is a 681-residue protein sequence, read N- to C-terminus: tRNA wybutosine-synthesizing protein 4 (681 aa).

Residues 1–11 (MSNKNQRKTKS) are compositionally biased toward basic residues. Residues 1-21 (MSNKNQRKTKSKDREVRKTND) are disordered. S-adenosyl-L-methionine-binding positions include Arg-66, Gly-92, Asp-119, 165–166 (NL), and Glu-193.

This sequence belongs to the methyltransferase superfamily. LCMT family.

The enzyme catalyses 7-[(3S)-3-amino-3-carboxypropyl]wyosine(37) in tRNA(Phe) + S-adenosyl-L-methionine = 7-[(3S)-(3-amino-3-methoxycarbonyl)propyl]wyosine(37) in tRNA(Phe) + S-adenosyl-L-homocysteine. It catalyses the reaction 7-[(3S)-(3-amino-3-methoxycarbonyl)propyl]wyosine(37) in tRNA(Phe) + S-adenosyl-L-methionine + CO2 = wybutosine(37) in tRNA(Phe) + S-adenosyl-L-homocysteine + 2 H(+). The protein operates within tRNA modification; wybutosine-tRNA(Phe) biosynthesis. Probable S-adenosyl-L-methionine-dependent methyltransferase that acts as a component of the wybutosine biosynthesis pathway. Wybutosine is a hyper modified guanosine with a tricyclic base found at the 3'-position adjacent to the anticodon of eukaryotic phenylalanine tRNA. May methylate the carboxyl group of leucine residues to form alpha-leucine ester residues. This chain is tRNA wybutosine-synthesizing protein 4 (ppm2), found in Schizosaccharomyces pombe (strain 972 / ATCC 24843) (Fission yeast).